A 188-amino-acid polypeptide reads, in one-letter code: Ras-related protein Rap-1 (188 aa).

12-19 (GSGGVGKS) is a binding site for GTP. Positions 34-42 (YDPTIEDSY) match the Effector region motif. Residues 59-63 (DTAGT) and 118-121 (NKCD) contribute to the GTP site. C185 carries the cysteine methyl ester modification. A lipid anchor (S-geranylgeranyl cysteine) is attached at C185. A propeptide spans 186–188 (ILL) (removed in mature form).

It belongs to the small GTPase superfamily. Ras family.

It localises to the cell membrane. It catalyses the reaction GTP + H2O = GDP + phosphate + H(+). This chain is Ras-related protein Rap-1 (RAP1), found in Physarum polycephalum (Slime mold).